The sequence spans 321 residues: Methyltransferase cfoB (321 aa).

This sequence belongs to the methyltransferase superfamily.

It functions in the pathway secondary metabolite biosynthesis; flavonoid biosynthesis. Methyltransferase; part of the gene cluster that mediates the biosynthesis of chlorflavonin, a fungal flavonoid with acetolactate synthase inhibitory activity. Within the pathway, cfoB is responsible for the methylation at position C7-OH of flavonoid. The pathway begins with the PKS-NRPS hybrid synthetase cfoA that uses benzoic acid or p-hydroxybenzoic acid as a starter unit with four rounds of chain elongation using malonyl-CoA to form the chalcone skeleton. Then, a new type of chalcone isomerase, cfoK, catalyzes the conversion of the chalcone into a flavanone by a histidine-mediated oxa-Michael addition mechanism. The desaturation of flavanone to flavone is catalyzed by a new type of flavone synthase, the flavin mononucleotide (FMN)-dependent oxidoreductase cfoJ. Monooxygenases cfoF, cfoG, and P450 cfoH are responsible for the hydroxylation of the flavonoid skeleton at sites C3, C8, and C2', respectively. Like cfoF, the dehydratase cfoI also plays a role in the hydroxylation of position C3. Methyltransferases cfoB, cfoC, and cfoD then catalyze the methylation of C7-OH, C8-OH, and C3-OH, respectively. Finally, the monooxygenase cfoE is responsible for the chlorination of flavonoid at position C3'. The protein is Methyltransferase cfoB of Aspergillus candidus.